A 338-amino-acid chain; its full sequence is Ribosomal RNA small subunit methyltransferase C (338 aa).

It belongs to the methyltransferase superfamily. RsmC family. Monomer.

Its subcellular location is the cytoplasm. It carries out the reaction guanosine(1207) in 16S rRNA + S-adenosyl-L-methionine = N(2)-methylguanosine(1207) in 16S rRNA + S-adenosyl-L-homocysteine + H(+). In terms of biological role, specifically methylates the guanine in position 1207 of 16S rRNA in the 30S particle. The chain is Ribosomal RNA small subunit methyltransferase C from Photorhabdus laumondii subsp. laumondii (strain DSM 15139 / CIP 105565 / TT01) (Photorhabdus luminescens subsp. laumondii).